A 962-amino-acid chain; its full sequence is RNA-binding protein 15 (962 aa).

3 stretches are compositionally biased toward basic and acidic residues: residues 1 to 10 (MRSAGREPLP), 34 to 52 (LRRD…ERSP), and 59 to 72 (RGGE…ERSK). The interval 1–167 (MRSAGREPLP…SAPGGGDGVE (167 aa)) is disordered. The segment covering 82–94 (GSSSGKTDSGGSR) has biased composition (low complexity). Residues 97–112 (LHLDKSSSRGGSREYE) are compositionally biased toward basic and acidic residues. Ser108 is subject to Phosphoserine. Positions 118-129 (SSSRLHSYSSPS) are enriched in low complexity. Residues 134–149 (SGGGESRSSSRGGGGE) show a composition bias toward gly residues. A compositionally biased stretch (low complexity) spans 150 to 159 (SRSSGAASSA). The RRM 1 domain maps to 169 to 251 (KTLKISELGS…RPLKIEAVYV (83 aa)). Ser178, Ser207, and Ser209 each carry phosphoserine. Lys245 is covalently cross-linked (Glycyl lysine isopeptide (Lys-Gly) (interchain with G-Cter in SUMO2)). Residues Ser252, Ser256, and Ser258 each carry the phosphoserine modification. Residues 257–297 (RSPLDKDAYAPSSSVVGTSVGSHRHAPGGGGGQRSLSPGGA) form a disordered region. A Phosphotyrosine modification is found at Tyr265. Low complexity predominate over residues 268–277 (SSSVVGTSVG). Ser291, Ser293, and Ser364 each carry phosphoserine. 2 RRM domains span residues 373–450 (RTLF…YGKA) and 454–528 (TRLW…FADT). Glycyl lysine isopeptide (Lys-Gly) (interchain with G-Cter in SUMO2) cross-links involve residues Lys405, Lys419, and Lys444. Lys449 bears the N6-acetyllysine mark. 2 stretches are compositionally biased toward basic and acidic residues: residues 553–580 (GHRA…RDLY) and 612–661 (SLDR…SERP). The disordered stretch occupies residues 553–779 (GHRAPDPLRS…KQDGGTAPVA (227 aa)). Thr567 is subject to Phosphothreonine. The residue at position 577 (Arg577) is an Asymmetric dimethylarginine; alternate; by PRMT1. Position 577 is an omega-N-methylarginine; alternate; by PRMT1 (Arg577). Residues Ser621, Ser655, Ser670, Ser674, and Ser701 each carry the phosphoserine modification. 3 stretches are compositionally biased toward basic and acidic residues: residues 673–692 (RSPE…DRSS), 701–729 (SPVR…AERD), and 742–751 (NPLKKEDRSD). Lys745 participates in a covalent cross-link: Glycyl lysine isopeptide (Lys-Gly) (interchain with G-Cter in SUMO2). Residues 754-771 (APSASTSSSKQKPPSQKQ) are compositionally biased toward low complexity. Ser768 and Ser782 each carry phosphoserine. Residues 778–957 (VAASSPKLCL…YLVMIIVRAK (180 aa)) enclose the SPOC domain. Positions 866–885 (GSSDSRSSSSSATSDTAAST) are disordered. A compositionally biased stretch (low complexity) spans 867–885 (SSDSRSSSSSATSDTAAST). Phosphoserine is present on Ser936.

The protein belongs to the RRM Spen family. As to quaternary structure, component of the WMM complex, a N6-methyltransferase complex composed of a catalytic subcomplex, named MAC, and of an associated subcomplex, named MACOM. The MAC subcomplex is composed of METTL3 and METTL14. The MACOM subcomplex is composed of WTAP, ZC3H13, CBLL1/HAKAI, VIRMA, and, in some cases of RBM15 (RBM15 or RBM15B). Also a component of a MACOM-like complex, named WTAP complex, composed of WTAP, ZC3H13, CBLL1, VIRMA, RBM15, BCLAF1 and THRAP3. Interacts with RBPJ. Interacts (via SPOC domain) with SETD1B. Interacts with NXF1, the interaction is required to promote mRNA export. Interacts with SF3B1. Methylated at Arg-577 by PRMT1, leading to promote ubiquitination by CNOT4 and subsequent degradation by the proteasome. In terms of processing, ubiquitinated by CNOT4 following methylation at Arg-577 by PRMT1.

It is found in the nucleus speckle. It localises to the nucleus. The protein resides in the nucleoplasm. The protein localises to the nucleus envelope. Its subcellular location is the nucleus membrane. Its function is as follows. RNA-binding protein that acts as a key regulator of N6-methyladenosine (m6A) methylation of RNAs, thereby regulating different processes, such as hematopoietic cell homeostasis, alternative splicing of mRNAs and X chromosome inactivation mediated by Xist RNA. Associated component of the WMM complex, a complex that mediates N6-methyladenosine (m6A) methylation of RNAs, a modification that plays a role in the efficiency of mRNA splicing and RNA processing. Plays a key role in m6A methylation, possibly by binding target RNAs and recruiting the WMM complex. Involved in random X inactivation mediated by Xist RNA: acts by binding Xist RNA and recruiting the WMM complex, which mediates m6A methylation, leading to target YTHDC1 reader on Xist RNA and promoting transcription repression activity of Xist. Required for the development of multiple tissues, such as the maintenance of the homeostasis of long-term hematopoietic stem cells and for megakaryocyte (MK) and B-cell differentiation. Regulates megakaryocyte differentiation by regulating alternative splicing of genes important for megakaryocyte differentiation; probably regulates alternative splicing via m6A regulation. Required for placental vascular branching morphogenesis and embryonic development of the heart and spleen. Acts as a regulator of thrombopoietin response in hematopoietic stem cells by regulating alternative splicing of MPL. May also function as an mRNA export factor, stimulating export and expression of RTE-containing mRNAs which are present in many retrotransposons that require to be exported prior to splicing. High affinity binding of pre-mRNA to RBM15 may allow targeting of the mRNP to the export helicase DBP5 in a manner that is independent of splicing-mediated NXF1 deposition, resulting in export prior to splicing. May be implicated in HOX gene regulation. This chain is RNA-binding protein 15, found in Mus musculus (Mouse).